Reading from the N-terminus, the 158-residue chain is Transcription elongation factor GreA (158 aa).

It belongs to the GreA/GreB family.

Its function is as follows. Necessary for efficient RNA polymerase transcription elongation past template-encoded arresting sites. The arresting sites in DNA have the property of trapping a certain fraction of elongating RNA polymerases that pass through, resulting in locked ternary complexes. Cleavage of the nascent transcript by cleavage factors such as GreA or GreB allows the resumption of elongation from the new 3'terminus. GreA releases sequences of 2 to 3 nucleotides. The polypeptide is Transcription elongation factor GreA (Yersinia pestis).